Reading from the N-terminus, the 157-residue chain is Transcription elongation factor GreA (157 aa).

The protein belongs to the GreA/GreB family.

Necessary for efficient RNA polymerase transcription elongation past template-encoded arresting sites. The arresting sites in DNA have the property of trapping a certain fraction of elongating RNA polymerases that pass through, resulting in locked ternary complexes. Cleavage of the nascent transcript by cleavage factors such as GreA or GreB allows the resumption of elongation from the new 3'terminus. GreA releases sequences of 2 to 3 nucleotides. This Caulobacter vibrioides (strain ATCC 19089 / CIP 103742 / CB 15) (Caulobacter crescentus) protein is Transcription elongation factor GreA.